Consider the following 516-residue polypeptide: 3-phosphoshikimate 1-carboxyvinyltransferase, chloroplastic (516 aa).

A chloroplast-targeting transit peptide spans 1–72; that stretch reads MAQSSRICHG…KVTASVSTSE (72 aa). 3-phosphoshikimate contacts are provided by Lys95, Ser96, and Arg100. Lys95 contributes to the phosphoenolpyruvate binding site. 2 residues coordinate phosphoenolpyruvate: Gly173 and Arg203. Residues Ser250, Ser251, Gln252, Ser278, Asp403, and Lys430 each contribute to the 3-phosphoshikimate site. Gln252 serves as a coordination point for phosphoenolpyruvate. The Proton acceptor role is filled by Asp403. Phosphoenolpyruvate is bound by residues Arg434, Arg476, and Lys501.

Belongs to the EPSP synthase family.

The protein localises to the plastid. It localises to the chloroplast. The enzyme catalyses 3-phosphoshikimate + phosphoenolpyruvate = 5-O-(1-carboxyvinyl)-3-phosphoshikimate + phosphate. It functions in the pathway metabolic intermediate biosynthesis; chorismate biosynthesis; chorismate from D-erythrose 4-phosphate and phosphoenolpyruvate: step 6/7. Functionally, catalyzes the transfer of the enolpyruvyl moiety of phosphoenolpyruvate (PEP) to the 5-hydroxyl of shikimate-3-phosphate (S3P) to produce enolpyruvyl shikimate-3-phosphate and inorganic phosphate. This chain is 3-phosphoshikimate 1-carboxyvinyltransferase, chloroplastic, found in Brassica napus (Rape).